The chain runs to 683 residues: uncharacterized protein (683 aa).

Composition is skewed to polar residues over residues 407–420 and 512–529; these read FETS…TYTP and EGSS…SSEA. Disordered regions lie at residues 407–427, 509–556, and 621–648; these read FETS…KLST, FSRE…SSTV, and HNTS…DHPD. A compositionally biased stretch (low complexity) spans 531–542; it reads LPPLLTTTPTPT. Composition is skewed to polar residues over residues 543–556 and 621–630; these read NTEK…SSTV and HNTSMPNPHH. Basic and acidic residues predominate over residues 633 to 648; that stretch reads VKPEDHPHHPEGDHPD. A helical transmembrane segment spans residues 657-677; the sequence is IWLLPIAGTIFALVALVIVNI.

It is found in the host membrane. This is an uncharacterized protein from Alcelaphine herpesvirus 1 (strain C500) (AlHV-1).